We begin with the raw amino-acid sequence, 308 residues long: Insoluble matrix shell protein 4 (308 aa).

3 disordered regions span residues 1-21, 47-104, and 134-250; these read HGNGYNSNNGNGYNSNNGNGY, NTNS…PNAV, and YDSN…NTNS. Low complexity predominate over residues 47-99; that stretch reads NTNSLNGNNNGNSNNNGNGNNNGNSNNNGNGNNNGNTNNGNSYDSNTNDDSNS.

As to expression, component of the acid-insoluble organic matrix of the calcified shell.

Its subcellular location is the secreted. The protein is Insoluble matrix shell protein 4 of Ruditapes philippinarum (Japanese carpet shell).